The chain runs to 344 residues: Protein POLAR LOCALIZATION DURING ASYMMETRIC DIVISION AND REDISTRIBUTION (344 aa).

Thr-19 bears the Phosphothreonine; by ASK7 mark. At Ser-79 the chain carries Phosphoserine; by ASK7. Thr-84 and Thr-86 each carry phosphothreonine; by ASK7. 2 positions are modified to phosphoserine; by ASK7: Ser-91 and Ser-94. 3 positions are modified to phosphothreonine; by ASK7: Thr-193, Thr-217, and Thr-233. Residue Ser-235 is modified to Phosphoserine; by ASK7. A coiled-coil region spans residues 262–297 (LETRQQEELVKLETALNRVERRLQEKETEVSWWKDA). Ser-308, Ser-309, Ser-320, Ser-321, and Ser-336 each carry phosphoserine; by ASK7.

In terms of assembly, component of a complex made of POLAR, BASL, ASK7/BIN2 and ASK3/SK12. Interacts with BASL, ASK7/BIN2 and ASK3/SK12. Phosphorylation by ASK7/BIN2 is increases turnover. As to expression, expressed in stomatal lineage cells with asymmetric division potential.

The protein resides in the cytoplasm. It is found in the cell cortex. Regulates asymmetric cell division (ACD), especially in stomatal-lineage cells. Acts as a stomatal lineage scaffold which regulates subcellular localization and transient polarization of kinases (e.g. ASK7/BIN2 and ASK3/SK12) involved in ACD in a BASL-dependent manner. Promotes the differentiation of both pavement cells and stomata. This is Protein POLAR LOCALIZATION DURING ASYMMETRIC DIVISION AND REDISTRIBUTION from Arabidopsis thaliana (Mouse-ear cress).